The sequence spans 135 residues: Protein cornichon homolog 1 (135 aa).

A run of 3 helical transmembrane segments spans residues 2–22, 51–71, and 111–131; these read VFVW…VIYQ, FVLQ…AMFL, and IVGL…TVLL.

Belongs to the cornichon family. Interacts with HKT1;3.

The protein resides in the endoplasmic reticulum membrane. Its subcellular location is the golgi apparatus membrane. Its function is as follows. Acts as a cargo receptor necessary for the transportation of the cation transporter HKT1;3 and possibly other secretory proteins from the endoplasmic reticulum (ER) in COPII-coated vesicles targeted to the Golgi apparatus. The chain is Protein cornichon homolog 1 from Oryza sativa subsp. japonica (Rice).